A 294-amino-acid polypeptide reads, in one-letter code: Shikimate dehydrogenase (NADP(+)) (294 aa).

Shikimate is bound by residues 22–24 (SLS) and S69. The active-site Proton acceptor is K73. Residues N94 and D111 each contribute to the shikimate site. NADP(+) is bound by residues 135 to 139 (GAGGA) and L236. Y238 contacts shikimate. Position 260 (G260) interacts with NADP(+).

This sequence belongs to the shikimate dehydrogenase family. Homodimer.

It catalyses the reaction shikimate + NADP(+) = 3-dehydroshikimate + NADPH + H(+). Its pathway is metabolic intermediate biosynthesis; chorismate biosynthesis; chorismate from D-erythrose 4-phosphate and phosphoenolpyruvate: step 4/7. Its function is as follows. Involved in the biosynthesis of the chorismate, which leads to the biosynthesis of aromatic amino acids. Catalyzes the reversible NADPH linked reduction of 3-dehydroshikimate (DHSA) to yield shikimate (SA). The protein is Shikimate dehydrogenase (NADP(+)) of Streptococcus equi subsp. zooepidemicus (strain MGCS10565).